A 396-amino-acid chain; its full sequence is Enoyl-[acyl-carrier-protein] reductase [NADH] (396 aa).

Residues 48-53 (GASTGY), 74-75 (FE), 111-112 (DA), and 139-140 (LA) each bind NAD(+). Tyrosine 225 contacts substrate. Tyrosine 235 acts as the Proton donor in catalysis. Residues lysine 244 and 273–275 (VVT) contribute to the NAD(+) site.

This sequence belongs to the TER reductase family. Monomer.

It carries out the reaction a 2,3-saturated acyl-[ACP] + NAD(+) = a (2E)-enoyl-[ACP] + NADH + H(+). It functions in the pathway lipid metabolism; fatty acid biosynthesis. In terms of biological role, involved in the final reduction of the elongation cycle of fatty acid synthesis (FAS II). Catalyzes the reduction of a carbon-carbon double bond in an enoyl moiety that is covalently linked to an acyl carrier protein (ACP). The chain is Enoyl-[acyl-carrier-protein] reductase [NADH] from Teredinibacter turnerae (strain ATCC 39867 / T7901).